Here is a 494-residue protein sequence, read N- to C-terminus: Xylan glycosyltransferase MUCI21 (494 aa).

At 1–40 (MRQNLKKVAQIKVDESKKLFPYVFRVKTSCGNCAKRSKPK) the chain is on the cytoplasmic side. The helical; Signal-anchor for type II membrane protein transmembrane segment at 41–61 (LIYLLIFSLISSCFVFAPQLL) threads the bilayer. Residues 62–494 (CFPYPSALFL…LIDAYAKSIR (433 aa)) lie on the Lumenal side of the membrane. Asparagine 375 carries N-linked (GlcNAc...) asparagine glycosylation.

The protein belongs to the glycosyltransferase 61 family.

It localises to the golgi apparatus membrane. In terms of biological role, glycosyletransferase required for the proper composition and structural properties of released seed coat mucilage. Required for the production of highly branched xylan polymers in seed coat mucilage. Facilitates the addition of xylose residues directly to the xylan backbone. Xylan with xylose side chains seems to be necessary for pectin attachment to the seed surface. Essential for xylan synthesis in seed coat epidermal (SCE) cells. This Arabidopsis thaliana (Mouse-ear cress) protein is Xylan glycosyltransferase MUCI21.